The sequence spans 46 residues: uncharacterized protein (46 aa).

This is an uncharacterized protein from Archaeoglobus fulgidus (strain ATCC 49558 / DSM 4304 / JCM 9628 / NBRC 100126 / VC-16).